Here is a 271-residue protein sequence, read N- to C-terminus: NADH-quinone oxidoreductase subunit B (271 aa).

[4Fe-4S] cluster-binding residues include Cys-37, Cys-38, Cys-103, and Cys-132. The tract at residues 227–271 (LAPPSVFGRAKRIPVDPKPSDEARAHGPGPTTESIGDVDGPDRGI) is disordered. The segment covering 239-251 (IPVDPKPSDEARA) has biased composition (basic and acidic residues).

This sequence belongs to the complex I 20 kDa subunit family. In terms of assembly, NDH-1 is composed of 14 different subunits. Subunits NuoB, C, D, E, F, and G constitute the peripheral sector of the complex. [4Fe-4S] cluster is required as a cofactor.

The protein localises to the cell membrane. It carries out the reaction a quinone + NADH + 5 H(+)(in) = a quinol + NAD(+) + 4 H(+)(out). NDH-1 shuttles electrons from NADH, via FMN and iron-sulfur (Fe-S) centers, to quinones in the respiratory chain. The immediate electron acceptor for the enzyme in this species is believed to be a menaquinone. Couples the redox reaction to proton translocation (for every two electrons transferred, four hydrogen ions are translocated across the cytoplasmic membrane), and thus conserves the redox energy in a proton gradient. The protein is NADH-quinone oxidoreductase subunit B of Frankia casuarinae (strain DSM 45818 / CECT 9043 / HFP020203 / CcI3).